Consider the following 541-residue polypeptide: Arginine--tRNA ligase (541 aa).

The 'HIGH' region signature appears at 119 to 129 (ANPTGPLHIGH).

The protein belongs to the class-I aminoacyl-tRNA synthetase family. Monomer.

It localises to the cytoplasm. The enzyme catalyses tRNA(Arg) + L-arginine + ATP = L-arginyl-tRNA(Arg) + AMP + diphosphate. This chain is Arginine--tRNA ligase (argS), found in Helicobacter pylori (strain J99 / ATCC 700824) (Campylobacter pylori J99).